A 330-amino-acid chain; its full sequence is Beta-ketoacyl-[acyl-carrier-protein] synthase III (330 aa).

Active-site residues include Cys-114 and His-257. The segment at 258–262 (QANLR) is ACP-binding. Asn-287 is a catalytic residue.

Belongs to the thiolase-like superfamily. FabH family. In terms of assembly, homodimer.

It localises to the cytoplasm. The catalysed reaction is malonyl-[ACP] + acetyl-CoA + H(+) = 3-oxobutanoyl-[ACP] + CO2 + CoA. It functions in the pathway lipid metabolism; fatty acid biosynthesis. Functionally, catalyzes the condensation reaction of fatty acid synthesis by the addition to an acyl acceptor of two carbons from malonyl-ACP. Catalyzes the first condensation reaction which initiates fatty acid synthesis and may therefore play a role in governing the total rate of fatty acid production. Possesses both acetoacetyl-ACP synthase and acetyl transacylase activities. Its substrate specificity determines the biosynthesis of branched-chain and/or straight-chain of fatty acids. The protein is Beta-ketoacyl-[acyl-carrier-protein] synthase III of Nitratidesulfovibrio vulgaris (strain ATCC 29579 / DSM 644 / CCUG 34227 / NCIMB 8303 / VKM B-1760 / Hildenborough) (Desulfovibrio vulgaris).